The primary structure comprises 1305 residues: Nonribosomal peptide synthetase hkm11 (1305 aa).

The interval 278–672 is adenylation; the sequence is TYGELDRWAK…GEIEHHLRPK (395 aa). One can recognise a Carrier domain in the interval 788-864; it reads APTTEQEALL…SLASRMRQYN (77 aa). At Ser-825 the chain carries O-(pantetheine 4'-phosphoryl)serine. Positions 926-1166 are condensation; sequence KGQLDRHQLQ…LCLNITAVRV (241 aa).

This sequence belongs to the NRP synthetase family.

The catalysed reaction is hancockiamide D + (E)-cinnamate + ATP = hancockiamide A + AMP + diphosphate. The enzyme catalyses hancockiamide H + (E)-cinnamate + ATP = hancockiamide G + AMP + diphosphate. It functions in the pathway secondary metabolite biosynthesis. Functionally, nonribosomal peptide synthetase; part of the gene cluster that mediates the biosynthesis of hancockiamides, an unusual new family of N-cinnamoylated piperazines. The NRPS hkm10 and the NmrA-like reductase hkm9 are proposed to convert two molecules of L-Phe to the intermediary piperazine called xenocockiamide A. Xenocockiamide A is then converted to hancockiamide D via a series of hydroxylations and O-methylations. The tyrosinase hkm6 may catalyze an aromatic hydroxylation, then the 2-oxoglutarate-dependent Fe(II) dioxygenase hkm4 and the FAD-dependent phenol hydroxylase hkm7 may catalyze consecutive hydroxylations to install 2 more hydroxy groups, and the methyltransferase hkm8 probably catalyzes two methylations using 2 molecules of S-adenosyl-L-methionine (SAM). The NRPS hkm11 activates and transfers trans-cinnamate supplied by the PAL hkm12 to hancockiamide D and produces hancockiamide A. NRPS Hkm11 has the flexibility to tolerate the bulky hancockiamide G as a substrate and the absence of the acetyl-transferase hkm3 opens up the opportunity for hkm11 to introduce a second N-cinnamoyl moiety. The cytochrome P450 monooxygenase hkm5 catalyzes the methylenedioxy bridge formation, converting hancockiamide A into hancockiamide G. Hkm5 can also convert hancockiamide B into hancockiamide C, and hancockiamide D into hancockiamide H. The N-acetyltransferase hkm3 finally transfers an acetyl group to 1-N of piperazine, converting hancockiamide A into hancockiamide B and hancockiamide G into hancockiamide C. This Aspergillus hancockii protein is Nonribosomal peptide synthetase hkm11.